Consider the following 306-residue polypeptide: Tyrosine recombinase XerC (306 aa).

Residues 6-92 (NTLYLQTKPY…ALRQWFSYLI (87 aa)) enclose the Core-binding (CB) domain. The 180-residue stretch at 113 to 292 (RLPKNIDAEQ…DFQHLAKIYD (180 aa)) folds into the Tyr recombinase domain. Active-site residues include arginine 152, lysine 176, histidine 244, arginine 247, and histidine 270. Tyrosine 279 functions as the O-(3'-phospho-DNA)-tyrosine intermediate in the catalytic mechanism.

It belongs to the 'phage' integrase family. XerC subfamily. In terms of assembly, forms a cyclic heterotetrameric complex composed of two molecules of XerC and two molecules of XerD.

The protein resides in the cytoplasm. Its function is as follows. Site-specific tyrosine recombinase, which acts by catalyzing the cutting and rejoining of the recombining DNA molecules. The XerC-XerD complex is essential to convert dimers of the bacterial chromosome into monomers to permit their segregation at cell division. It also contributes to the segregational stability of plasmids. This Actinobacillus pleuropneumoniae serotype 7 (strain AP76) protein is Tyrosine recombinase XerC.